The following is a 198-amino-acid chain: Dephospho-CoA kinase (198 aa).

Residues 4–198 (IIGITGGIAS…DSQLRRLQNE (195 aa)) form the DPCK domain. 12–17 (ASGKST) is an ATP binding site.

It belongs to the CoaE family.

It localises to the cytoplasm. The enzyme catalyses 3'-dephospho-CoA + ATP = ADP + CoA + H(+). The protein operates within cofactor biosynthesis; coenzyme A biosynthesis; CoA from (R)-pantothenate: step 5/5. Catalyzes the phosphorylation of the 3'-hydroxyl group of dephosphocoenzyme A to form coenzyme A. The sequence is that of Dephospho-CoA kinase from Streptococcus mutans serotype c (strain ATCC 700610 / UA159).